The chain runs to 780 residues: Pumilio domain-containing protein C4G8.03c (780 aa).

Disordered regions lie at residues 1–29, 298–330, and 358–411; these read MVNR…LSSY, LSHF…LHSK, and NHHS…GKTV. The span at 298 to 307 shows a compositional bias: basic and acidic residues; it reads LSHFPDHLDP. Low complexity predominate over residues 311–322; the sequence is PSPYQPSSLQPL. Over residues 358 to 382 the composition is skewed to polar residues; that stretch reads NHHSSLSMDNDPTNVSTKNRNNQTV. Residues 435-778 form the PUM-HD domain; the sequence is EKSDDLSNLL…HILAKLTSST (344 aa). 9 Pumilio repeats span residues 462 to 497, 498 to 533, 534 to 569, 570 to 606, 607 to 642, 643 to 678, 679 to 714, 715 to 752, and 753 to 780; these read GFLG…LFFP, EIRQ…SMLN, GIGE…SLLL, KIII…PLFL, SMEE…RLVN, SIIK…RIIE, KFFG…QMLQ, EFLS…LILR, and SISH…STSS.

The chain is Pumilio domain-containing protein C4G8.03c from Schizosaccharomyces pombe (strain 972 / ATCC 24843) (Fission yeast).